The chain runs to 478 residues: Argininosuccinate lyase (478 aa).

Belongs to the lyase 1 family. Argininosuccinate lyase subfamily.

It is found in the cytoplasm. The catalysed reaction is 2-(N(omega)-L-arginino)succinate = fumarate + L-arginine. Its pathway is amino-acid biosynthesis; L-arginine biosynthesis; L-arginine from L-ornithine and carbamoyl phosphate: step 3/3. In Rhodospirillum rubrum (strain ATCC 11170 / ATH 1.1.1 / DSM 467 / LMG 4362 / NCIMB 8255 / S1), this protein is Argininosuccinate lyase.